A 478-amino-acid chain; its full sequence is Cytochrome P450 family 716 subfamily AD polypeptide 4 (478 aa).

A helical transmembrane segment spans residues 1–21 (MELFLPSVLLILTVFCFYYLF). Cys-425 serves as a coordination point for heme.

This sequence belongs to the cytochrome P450 family. Heme is required as a cofactor. In terms of tissue distribution, mainly expressed in petioles and, to a lower extent, in roots.

The protein resides in the membrane. The catalysed reaction is (1S,3bR,4R,5aR,9aR,9bR,11aS)-1-[(4R)-5-[(2S)-3,3-dimethyloxiran-2-yl]-1,4-dihydroxybutan-2-yl]-3b,6,6,9a,11a-pentamethyl-7-oxo-1H,2H,3bH,4H,5H,5aH,6H,7H,9aH,9bH,10H,11H,11aH-cyclopenta[a]phenanthren-4-yl acetate + reduced [NADPH--hemoprotein reductase] + O2 = (1S,3bR,4R,5aR,9aR,9bR,11aS)-1-(1-hydroxy-4-oxobutan-2-yl)-3b,6,6,9a,11a-pentamethyl-7-oxo-1H,2H,3bH,4H,5H,5aH,6H,7H,9aH,9bH,10H,11H,11aH-cyclopenta[a]phenanthren-4-yl acetate + 2-methylpropanoate + oxidized [NADPH--hemoprotein reductase] + H2O + 2 H(+). It functions in the pathway secondary metabolite biosynthesis; terpenoid biosynthesis. Its function is as follows. Monooxygenase involved in the biosynthesis of limonoids triterpene natural products such as azadirachtin, an antifeedant widely used as bioinsecticide, and possessing many medicinal applications including anti-tumoral, anti-malarial, anti-rheumatic, antibacterial, anti-inflammatory, anti-pyretic and diuretic effects. Catalyzes the formation of (1S,3bR,4R,5aR,9aR,9bR,11aS)-1-(1-hydroxy-4-oxobutan-2-yl)-3b,6,6,9a,11a-pentamethyl-7-oxo-1H,2H,3bH,4H,5H,5aH,6H,7H,9aH,9bH,10H,11H,11aH-cyclopenta[a]phenanthren-4-yl acetate. In Melia azedarach (Chinaberry tree), this protein is Cytochrome P450 family 716 subfamily AD polypeptide 4.